Reading from the N-terminus, the 178-residue chain is SCAN domain-containing protein 1 (178 aa).

Residues 1 to 107 (MAATEQSLAP…GSRPGPETFR (107 aa)) are disordered. The span at 9–18 (APAGSSAPPS) shows a compositional bias: low complexity. The span at 36–54 (GSSSTPEAPSIPDSSNPSA) shows a compositional bias: polar residues. Positions 107-178 (RQRFRQFRYQ…RRRTDVRITG (72 aa)) constitute an SCAN box domain.

As to quaternary structure, interacts with ZNF202.

It is found in the nucleus. May regulate transcriptional activity. This Bos taurus (Bovine) protein is SCAN domain-containing protein 1 (SCAND1).